The following is a 925-amino-acid chain: Bifunctional glutamine synthetase adenylyltransferase/adenylyl-removing enzyme (925 aa).

The segment at 1–426 is adenylyl removase; sequence MTDASDLLSL…AQFDQVFADK (426 aa). Residues 436–925 form an adenylyl transferase region; sequence DQAAGCIWSG…AALWARVFGA (490 aa).

It belongs to the GlnE family. It depends on Mg(2+) as a cofactor.

It carries out the reaction [glutamine synthetase]-O(4)-(5'-adenylyl)-L-tyrosine + phosphate = [glutamine synthetase]-L-tyrosine + ADP. The catalysed reaction is [glutamine synthetase]-L-tyrosine + ATP = [glutamine synthetase]-O(4)-(5'-adenylyl)-L-tyrosine + diphosphate. Its function is as follows. Involved in the regulation of glutamine synthetase GlnA, a key enzyme in the process to assimilate ammonia. When cellular nitrogen levels are high, the C-terminal adenylyl transferase (AT) inactivates GlnA by covalent transfer of an adenylyl group from ATP to specific tyrosine residue of GlnA, thus reducing its activity. Conversely, when nitrogen levels are low, the N-terminal adenylyl removase (AR) activates GlnA by removing the adenylyl group by phosphorolysis, increasing its activity. The regulatory region of GlnE binds the signal transduction protein PII (GlnB) which indicates the nitrogen status of the cell. In Burkholderia mallei (strain ATCC 23344), this protein is Bifunctional glutamine synthetase adenylyltransferase/adenylyl-removing enzyme.